Here is a 1111-residue protein sequence, read N- to C-terminus: Putative leucine--tRNA ligase, cytoplasmic (1111 aa).

The short motif at 74-84 is the 'HIGH' region element; that stretch reads PYMNGALHLGH. Ser460 bears the Phosphoserine mark. Positions 737 to 741 match the 'KMSKS' region motif; sequence KMSKS. Lys740 serves as a coordination point for ATP.

It belongs to the class-I aminoacyl-tRNA synthetase family.

Its subcellular location is the cytoplasm. The enzyme catalyses tRNA(Leu) + L-leucine + ATP = L-leucyl-tRNA(Leu) + AMP + diphosphate. The polypeptide is Putative leucine--tRNA ligase, cytoplasmic (lrs1) (Schizosaccharomyces pombe (strain 972 / ATCC 24843) (Fission yeast)).